Here is an 809-residue protein sequence, read N- to C-terminus: Valine--tRNA ligase (809 aa).

Positions Pro-60 to His-70 match the 'HIGH' region motif. The 'KMSKS' region signature appears at Arg-546–Ser-550. Residue Lys-549 coordinates ATP.

This sequence belongs to the class-I aminoacyl-tRNA synthetase family. ValS type 2 subfamily.

Its subcellular location is the cytoplasm. The catalysed reaction is tRNA(Val) + L-valine + ATP = L-valyl-tRNA(Val) + AMP + diphosphate. In terms of biological role, catalyzes the attachment of valine to tRNA(Val). As ValRS can inadvertently accommodate and process structurally similar amino acids such as threonine, to avoid such errors, it has a 'posttransfer' editing activity that hydrolyzes mischarged Thr-tRNA(Val) in a tRNA-dependent manner. The polypeptide is Valine--tRNA ligase (Sulfurisphaera tokodaii (strain DSM 16993 / JCM 10545 / NBRC 100140 / 7) (Sulfolobus tokodaii)).